The sequence spans 385 residues: Tryptophan--tRNA ligase (385 aa).

Positions 89–98 (PSSKTMHIGH) match the 'HIGH' region motif. Residues 268 to 272 (KMSAS) carry the 'KMSKS' region motif.

The protein belongs to the class-I aminoacyl-tRNA synthetase family. As to quaternary structure, homodimer.

It catalyses the reaction tRNA(Trp) + L-tryptophan + ATP = L-tryptophyl-tRNA(Trp) + AMP + diphosphate + H(+). The chain is Tryptophan--tRNA ligase from Encephalitozoon cuniculi (strain GB-M1) (Microsporidian parasite).